The sequence spans 216 residues: Phosphoribosylaminoimidazole-succinocarboxamide synthase (216 aa).

It belongs to the SAICAR synthetase family.

The enzyme catalyses 5-amino-1-(5-phospho-D-ribosyl)imidazole-4-carboxylate + L-aspartate + ATP = (2S)-2-[5-amino-1-(5-phospho-beta-D-ribosyl)imidazole-4-carboxamido]succinate + ADP + phosphate + 2 H(+). It participates in purine metabolism; IMP biosynthesis via de novo pathway; 5-amino-1-(5-phospho-D-ribosyl)imidazole-4-carboxamide from 5-amino-1-(5-phospho-D-ribosyl)imidazole-4-carboxylate: step 1/2. This chain is Phosphoribosylaminoimidazole-succinocarboxamide synthase (purC), found in Aquifex aeolicus (strain VF5).